The chain runs to 523 residues: MSNRVIIFDTTLRDGEQALAASLTVKEKLQIALSLERLGVDVMEVGFPVSSPGDFESVQTIARTIKNSRVCALARALEKDIDAAAQSLSVAEQFRIHTFISTSTIHVESKLKRSFDQVLDMAVGAVKYARRFTDDVEFSCEDAGRTPIDNLCRMVEAAIKAGAKTINIPDTVGYTVPSEFGGIIQNLFDRVPNIDQAVISVHCHDDLGLSVANSITAVQHGARQIECTVNGIGERAGNCSLEEIAMIIATRKASLGLETGINAKEIHRTSNLVSQLCNMPVQANKAIVGANAFTHSSGIHQDGVLKSQNTYEIMTPESIGLNRNNLNMTSRSGRHVIKHRMEEMGYGEQDYDMDTLYEAFLKLADKKGQVFDYDLEALVYVEAQAEDENHYGLQQLVVHSDSTQGQATATVTLSIDGKAVTEAATGNGPVDAAYKAIARASGCEINISSYQLSAKGQGQDALGQVDITAKYHDQSFHGVGLATDVVEASAAALIHVMNLTWRADKVAENKHKLKQARTELGGV.

Residues 5 to 267 (VIIFDTTLRD…ETGINAKEIH (263 aa)) enclose the Pyruvate carboxyltransferase domain. Residues aspartate 14, histidine 202, histidine 204, and asparagine 238 each coordinate Mn(2+). The tract at residues 392 to 523 (GLQQLVVHSD…KQARTELGGV (132 aa)) is regulatory domain.

This sequence belongs to the alpha-IPM synthase/homocitrate synthase family. LeuA type 1 subfamily. In terms of assembly, homodimer. Requires Mn(2+) as cofactor.

The protein localises to the cytoplasm. It carries out the reaction 3-methyl-2-oxobutanoate + acetyl-CoA + H2O = (2S)-2-isopropylmalate + CoA + H(+). It participates in amino-acid biosynthesis; L-leucine biosynthesis; L-leucine from 3-methyl-2-oxobutanoate: step 1/4. Catalyzes the condensation of the acetyl group of acetyl-CoA with 3-methyl-2-oxobutanoate (2-ketoisovalerate) to form 3-carboxy-3-hydroxy-4-methylpentanoate (2-isopropylmalate). The protein is 2-isopropylmalate synthase of Shewanella loihica (strain ATCC BAA-1088 / PV-4).